The primary structure comprises 27 residues: Defensin-like protein 2 (27 aa).

Q1 is modified (pyrrolidone carboxylic acid).

It belongs to the DEFL family. As to quaternary structure, forms oligomers in its native state.

In terms of biological role, possesses some antifungal activity sensitive to inorganic cations and antibacterial activity against B.megaterium. The chain is Defensin-like protein 2 from Brassica campestris (Field mustard).